A 737-amino-acid chain; its full sequence is Procollagen-lysine,2-oxoglutarate 5-dioxygenase 2 (737 aa).

The N-terminal stretch at 1–25 (MGGCTVKPQLLLLALVLHPWNPCLG) is a signal peptide. Residues Asn-63, Asn-209, and Asn-297 are each glycosylated (N-linked (GlcNAc...) asparagine). Thr-320 is subject to Phosphothreonine. Tyr-323 is subject to Phosphotyrosine. N-linked (GlcNAc...) asparagine glycosylation is found at Asn-365 and Asn-522. Residues 644 to 737 (KGFALLNFVV…RYIAVSFIDP (94 aa)) enclose the Fe2OG dioxygenase domain. Fe cation is bound by residues His-666 and Asp-668. Asn-696 is a glycosylation site (N-linked (GlcNAc...) asparagine). Position 704 is an N6-succinyllysine (Lys-704). His-718 is a binding site for Fe cation. The N-linked (GlcNAc...) asparagine glycan is linked to Asn-725. Arg-728 is a catalytic residue.

In terms of assembly, homodimer. It depends on Fe(2+) as a cofactor. L-ascorbate serves as cofactor. Highly expressed in pancreas and muscle. Isoform 1 and isoform 2 are expressed in the majority of the examined cell types. Isoform 2 is specifically expressed in skin, lung, dura and aorta.

It is found in the rough endoplasmic reticulum membrane. It carries out the reaction L-lysyl-[collagen] + 2-oxoglutarate + O2 = (5R)-5-hydroxy-L-lysyl-[collagen] + succinate + CO2. In terms of biological role, forms hydroxylysine residues in -Xaa-Lys-Gly- sequences in collagens. These hydroxylysines serve as sites of attachment for carbohydrate units and are essential for the stability of the intermolecular collagen cross-links. This chain is Procollagen-lysine,2-oxoglutarate 5-dioxygenase 2, found in Homo sapiens (Human).